The chain runs to 176 residues: Large ribosomal subunit protein uL5 (176 aa).

The protein belongs to the universal ribosomal protein uL5 family. As to quaternary structure, part of the 50S ribosomal subunit; contacts the 5S rRNA and probably tRNA. Forms a bridge to the 30S subunit in the 70S ribosome.

Functionally, this is one of the proteins that bind and probably mediate the attachment of the 5S RNA into the large ribosomal subunit, where it forms part of the central protuberance. In the 70S ribosome it contacts protein S13 of the 30S subunit (bridge B1b), connecting the 2 subunits; this bridge is implicated in subunit movement. May contact the P site tRNA; the 5S rRNA and some of its associated proteins might help stabilize positioning of ribosome-bound tRNAs. The polypeptide is Large ribosomal subunit protein uL5 (Picrophilus torridus (strain ATCC 700027 / DSM 9790 / JCM 10055 / NBRC 100828 / KAW 2/3)).